A 610-amino-acid polypeptide reads, in one-letter code: Ectonucleoside triphosphate diphosphohydrolase 7 (610 aa).

The Cytoplasmic portion of the chain corresponds to 1 to 28 (MARISFSCLFPASWHCSLPSVTQFSRQR). Residues 29–49 (VALLIISVAVFILVFAAVADL) traverse the membrane as a helical segment. Residues 50-555 (QLWSSRAFRD…VSWFRISFVY (506 aa)) lie on the Vesicular side of the membrane. The active-site Proton acceptor is the glutamate 217. Residues asparagine 336 and asparagine 400 are each glycosylated (N-linked (GlcNAc...) asparagine). Cysteine 454 and cysteine 483 are joined by a disulfide. Residues 556 to 576 (NHYLFFACILVVLLSIVLYIL) form a helical membrane-spanning segment. Over 577 to 610 (RLRRIHRRQARASALDLLLMEEGVHTVLEPGIPT) the chain is Cytoplasmic.

The protein belongs to the GDA1/CD39 NTPase family. The cofactor is Ca(2+). Mg(2+) serves as cofactor.

Its subcellular location is the cytoplasmic vesicle membrane. The catalysed reaction is a ribonucleoside 5'-triphosphate + H2O = a ribonucleoside 5'-diphosphate + phosphate + H(+). The enzyme catalyses UTP + H2O = UDP + phosphate + H(+). It carries out the reaction GTP + H2O = GDP + phosphate + H(+). It catalyses the reaction CTP + H2O = CDP + phosphate + H(+). Functionally, catalyzes the hydrolysis of nucleoside triphosphates and diphosphates in a calcium- or magnesium-dependent manner. Preferentially hydrolyzes nucleoside 5'-triphosphates, with substrate preference for UTP &gt; GTP &gt; CTP. Hydrolyzes ATP and nucleoside diphosphates only to a minor extent. This Xenopus tropicalis (Western clawed frog) protein is Ectonucleoside triphosphate diphosphohydrolase 7 (entpd7).